Here is a 113-residue protein sequence, read N- to C-terminus: Nitrogenase-stabilizing/protective protein NifW (113 aa).

It belongs to the NifW family. Homotrimer; associates with NifD.

May protect the nitrogenase Fe-Mo protein from oxidative damage. In Polaromonas naphthalenivorans (strain CJ2), this protein is Nitrogenase-stabilizing/protective protein NifW.